Consider the following 313-residue polypeptide: Phosphoenolpyruvate phosphomutase (313 aa).

D69 serves as the catalytic Nucleophile.

Belongs to the isocitrate lyase/PEP mutase superfamily. PEP mutase family.

It catalyses the reaction phosphoenolpyruvate + H(+) = 3-phosphonopyruvate. It functions in the pathway secondary metabolite biosynthesis; bialaphos biosynthesis. Its function is as follows. Formation of a carbon-phosphorus bond by converting phosphoenolpyruvate (PEP) to phosphonopyruvate (P-Pyr). The chain is Phosphoenolpyruvate phosphomutase (bcpB) from Streptomyces hygroscopicus.